Consider the following 113-residue polypeptide: Ribulose bisphosphate carboxylase small subunit (113 aa).

It belongs to the RuBisCO small chain family. As to quaternary structure, heterohexadecamer of 8 large and 8 small subunits. RuBisCO interacts with the C-terminus of CcmM, and can be found in complexes that also include carbonic anhydrase (ccaA).

Its subcellular location is the carboxysome. RuBisCO catalyzes two reactions: the carboxylation of D-ribulose 1,5-bisphosphate, the primary event in carbon dioxide fixation, as well as the oxidative fragmentation of the pentose substrate in the photorespiration process. Both reactions occur simultaneously and in competition at the same active site. Although the small subunit is not catalytic it is essential for maximal activity. The polypeptide is Ribulose bisphosphate carboxylase small subunit (Synechocystis sp. (strain ATCC 27184 / PCC 6803 / Kazusa)).